The following is a 461-amino-acid chain: Acetylornithine aminotransferase, mitochondrial (461 aa).

The tract at residues 36–56 (YATASQLTHPDPTEDSPSGKM) is disordered. The residue at position 312 (Lys-312) is an N6-(pyridoxal phosphate)lysine.

The protein belongs to the class-III pyridoxal-phosphate-dependent aminotransferase family. Requires pyridoxal 5'-phosphate as cofactor.

The protein localises to the mitochondrion matrix. It catalyses the reaction N(2)-acetyl-L-ornithine + 2-oxoglutarate = N-acetyl-L-glutamate 5-semialdehyde + L-glutamate. The protein operates within amino-acid biosynthesis; L-arginine biosynthesis; N(2)-acetyl-L-ornithine from L-glutamate: step 4/4. This is Acetylornithine aminotransferase, mitochondrial (arg-8) from Neurospora crassa (strain ATCC 24698 / 74-OR23-1A / CBS 708.71 / DSM 1257 / FGSC 987).